Here is a 245-residue protein sequence, read N- to C-terminus: Uridylate kinase (245 aa).

An ATP-binding site is contributed by K18 to G21. G60 provides a ligand contact to UMP. Positions 61 and 65 each coordinate ATP. UMP-binding positions include D80 and T141–T148. T168, Y174, and D177 together coordinate ATP.

The protein belongs to the UMP kinase family. In terms of assembly, homohexamer.

The protein localises to the cytoplasm. It carries out the reaction UMP + ATP = UDP + ADP. It participates in pyrimidine metabolism; CTP biosynthesis via de novo pathway; UDP from UMP (UMPK route): step 1/1. Its activity is regulated as follows. Inhibited by UTP. Functionally, catalyzes the reversible phosphorylation of UMP to UDP. The chain is Uridylate kinase from Pseudomonas aeruginosa (strain UCBPP-PA14).